The following is an 819-amino-acid chain: Ribosome-releasing factor 2, mitochondrial (819 aa).

Residues 1-30 (MWKWNVRRWAGARVNISKNRLSVINVGSRY) constitute a mitochondrion transit peptide. Residues 39–327 (SKVRNIGIIA…AIVNYLPSPI (289 aa)) form the tr-type G domain. Residues 48 to 55 (AHIDAGKT), 113 to 117 (DTPGH), and 165 to 168 (NKMD) each bind GTP.

The protein belongs to the TRAFAC class translation factor GTPase superfamily. Classic translation factor GTPase family. EF-G/EF-2 subfamily.

It is found in the mitochondrion. Its function is as follows. Mitochondrial GTPase that mediates the disassembly of ribosomes from messenger RNA at the termination of mitochondrial protein biosynthesis. Not involved in the GTP-dependent ribosomal translocation step during translation elongation. The chain is Ribosome-releasing factor 2, mitochondrial from Saccharomyces cerevisiae (strain RM11-1a) (Baker's yeast).